We begin with the raw amino-acid sequence, 369 residues long: GDSL esterase/lipase At5g41890 (369 aa).

Catalysis depends on Ser32, which acts as the Nucleophile. Catalysis depends on residues Asp334 and His337.

The protein belongs to the 'GDSL' lipolytic enzyme family.

The sequence is that of GDSL esterase/lipase At5g41890 from Arabidopsis thaliana (Mouse-ear cress).